The chain runs to 95 residues: Probable FAD-linked sulfhydryl oxidase OPG072 (95 aa).

The Intravirion segment spans residues 1–8 (MNPKHWGR). The region spanning 1–95 (MNPKHWGRAA…AIDVSKVKPL (95 aa)) is the ERV/ALR sulfhydryl oxidase domain. Residues 9 to 25 (AAWTIIFIVLSQAGLDG) form a helical membrane-spanning segment. Residues 26-95 (NIEACKRKLY…AIDVSKVKPL (70 aa)) are Virion surface-facing. Cys-43 and Cys-46 are joined by a disulfide.

The protein belongs to the orthopoxvirus OPG072 family. As to quaternary structure, interacts with OPG128; this interaction involves formation of a transient disulfide-bonded intermediate, allowing disulfide bond transfer. Requires FAD as cofactor.

Its subcellular location is the virion membrane. It is found in the host cytoplasm. The catalysed reaction is 2 R'C(R)SH + O2 = R'C(R)S-S(R)CR' + H2O2. In terms of biological role, FAD-dependent sulfhydryl oxidase that catalyzes disulfide bond formation. The complete pathway for formation of disulfide bonds in intracellular virion membrane proteins sequentially involves thiol-disulfide transfer between OPG072, OPG128 and OPG088. The sequence is that of Probable FAD-linked sulfhydryl oxidase OPG072 (OPG072) from Variola virus (isolate Human/India/Ind3/1967) (VARV).